The following is a 395-amino-acid chain: Synaptotagmin-8 (395 aa).

The Extracellular portion of the chain corresponds to 1–44 (MQADRSMKMGHVSNPLSTSAPVDATAGPNLIPDLITKIPWPRWI). The helical; Signal-anchor for type III membrane protein transmembrane segment at 45 to 65 (LFIAILAAGVLLVSCLLCVIC) threads the bilayer. Residues 66–395 (YCCHRQRHRK…PRLPLLRPRS (330 aa)) are Cytoplasmic-facing. 2 C2 domains span residues 113–229 (PWGQ…ESWY) and 241–370 (QMGE…AQWH).

Belongs to the synaptotagmin family. Homodimer or homooligomer. Homodimerization and homooligomerization do not depend on Ca(2+). Interacts with SYNCRIP isoform 2 C-terminus. Binds inositol 1,3,4,5-tetrakisphosphate (IP4). Binds to AP2 in a Ca(2+)-independent manner. Interacts with STX1A, STX1B and STX2; the interaction is Ca(2+)-dependent. In terms of tissue distribution, ubiquitous. Strongly expressed in heart, kidney, cerebral cortex, pancreas, and many insulin-secreting cells; lower expression in spleen. Broadly distributed in kidney.

It localises to the cell membrane. Its subcellular location is the cytoplasmic vesicle. The protein resides in the secretory vesicle. The protein localises to the acrosome. Its function is as follows. Involved in the trafficking and exocytosis of secretory vesicles in non-neuronal tissues. Mediates Ca(2+)-regulation of exocytosis acrosomal reaction in sperm. May mediate Ca(2+)-regulation of exocytosis in insulin secreted cells. This chain is Synaptotagmin-8 (Syt8), found in Rattus norvegicus (Rat).